The following is a 469-amino-acid chain: Ribulose bisphosphate carboxylase large chain (469 aa).

An N6,N6,N6-trimethyllysine modification is found at K8. Substrate-binding residues include N117 and T167. K169 acts as the Proton acceptor in catalysis. K171 serves as a coordination point for substrate. The Mg(2+) site is built by K195, D197, and E198. K195 carries the N6-carboxylysine modification. The Proton acceptor role is filled by H288. Residues R289, H321, and S373 each coordinate substrate.

This sequence belongs to the RuBisCO large chain family. Type I subfamily. Heterohexadecamer of 8 large chains and 8 small chains; disulfide-linked. The disulfide link is formed within the large subunit homodimers. Mg(2+) serves as cofactor. In terms of processing, the disulfide bond which can form in the large chain dimeric partners within the hexadecamer appears to be associated with oxidative stress and protein turnover.

Its subcellular location is the plastid. The protein resides in the chloroplast. It carries out the reaction 2 (2R)-3-phosphoglycerate + 2 H(+) = D-ribulose 1,5-bisphosphate + CO2 + H2O. The catalysed reaction is D-ribulose 1,5-bisphosphate + O2 = 2-phosphoglycolate + (2R)-3-phosphoglycerate + 2 H(+). In terms of biological role, ruBisCO catalyzes two reactions: the carboxylation of D-ribulose 1,5-bisphosphate, the primary event in carbon dioxide fixation, as well as the oxidative fragmentation of the pentose substrate in the photorespiration process. Both reactions occur simultaneously and in competition at the same active site. The protein is Ribulose bisphosphate carboxylase large chain of Coleonema pulchellum (Confetti bush).